Here is a 329-residue protein sequence, read N- to C-terminus: tRNA N6-adenosine threonylcarbamoyltransferase (329 aa).

Fe cation contacts are provided by His108, His112, and Tyr129. Residues 129–133 (YVSGG), Asp161, Glu182, and Ser261 each bind substrate. Residue Asp289 coordinates Fe cation.

The protein belongs to the KAE1 / TsaD family. The cofactor is Fe(2+).

Its subcellular location is the cytoplasm. It carries out the reaction L-threonylcarbamoyladenylate + adenosine(37) in tRNA = N(6)-L-threonylcarbamoyladenosine(37) in tRNA + AMP + H(+). Functionally, required for the formation of a threonylcarbamoyl group on adenosine at position 37 (t(6)A37) in tRNAs that read codons beginning with adenine. Is probably involved in the transfer of the threonylcarbamoyl moiety of threonylcarbamoyl-AMP (TC-AMP) to the N6 group of A37. The chain is tRNA N6-adenosine threonylcarbamoyltransferase from Ignicoccus hospitalis (strain KIN4/I / DSM 18386 / JCM 14125).